A 2080-amino-acid chain; its full sequence is Fatty acid synthase beta subunit TOXC (2080 aa).

The 228-residue stretch at 170 to 397 (GRYFDELREL…LYRFNLLLRK (228 aa)) folds into the Starter acyltransferase (SAT) domain. The For acetyltransferase activity role is filled by Ser276. An enoyl reductase (ER) domain region spans residues 585–830 (SRLLGLPPIM…VIVETEGLND (246 aa)). The segment at 1155-1644 (GKSRSWRHAI…LPNQKLEVKL (490 aa)) is dehydratase (DH) domain. Residues 1544-1662 (SVDFEDPVSV…MIRLHIEARA (119 aa)) enclose the MaoC-like domain. Residues 1682-2046 (TYVFTGQGSQ…FQYVYDLTGS (365 aa)) enclose the Malonyl-CoA:ACP transacylase (MAT) domain. The malonyl/palmitoyl transferase (MT/PT) domain stretch occupies residues 1683–2046 (YVFTGQGSQE…FQYVYDLTGS (364 aa)). Catalysis depends on Ser1828, which acts as the For malonyltransferase activity.

Belongs to the fungal fatty acid synthetase subunit beta family.

It carries out the reaction acetyl-CoA + n malonyl-CoA + 2n NADPH + 4n H(+) = a long-chain-acyl-CoA + n CoA + n CO2 + 2n NADP(+).. The enzyme catalyses holo-[ACP] + acetyl-CoA = acetyl-[ACP] + CoA. It catalyses the reaction holo-[ACP] + malonyl-CoA = malonyl-[ACP] + CoA. The catalysed reaction is a (3R)-hydroxyacyl-[ACP] = a (2E)-enoyl-[ACP] + H2O. It carries out the reaction a 2,3-saturated acyl-[ACP] + NAD(+) = a (2E)-enoyl-[ACP] + NADH + H(+). The enzyme catalyses (9Z)-octadecenoyl-[ACP] + H2O = (9Z)-octadecenoate + holo-[ACP] + H(+). It participates in mycotoxin biosynthesis; HC-toxin biosynthesis. Functionally, fatty acid synthase beta subunit, part of the diffuse TOX2 gene cluster that mediates the biosynthesis of the HC-toxin, cyclic tetrapeptide of structure cyclo(D-Pro-L-Ala-D-Ala-L-Aeo), where Aeo stands for 2-amino-9,10-epoxi-8-oxodecanoic acid. HC-toxin is a determinant of specificity and virulence in the interaction between the producing fungus and its host, maize. TOXC contribute to the synthesis of the decanoic backbone of 2-amino-9,10-epoxi-8-oxodecanoic acid, an essential precursor for the production of the major forms of HC-toxin by the non-ribosomal peptide synthetase HTS1. The protein is Fatty acid synthase beta subunit TOXC of Cochliobolus carbonum (Maize leaf spot fungus).